We begin with the raw amino-acid sequence, 428 residues long: tRNA(Ile)-lysidine synthase (428 aa).

25–30 (SGGIDS) provides a ligand contact to ATP.

It belongs to the tRNA(Ile)-lysidine synthase family.

The protein resides in the cytoplasm. It carries out the reaction cytidine(34) in tRNA(Ile2) + L-lysine + ATP = lysidine(34) in tRNA(Ile2) + AMP + diphosphate + H(+). In terms of biological role, ligates lysine onto the cytidine present at position 34 of the AUA codon-specific tRNA(Ile) that contains the anticodon CAU, in an ATP-dependent manner. Cytidine is converted to lysidine, thus changing the amino acid specificity of the tRNA from methionine to isoleucine. The protein is tRNA(Ile)-lysidine synthase of Haemophilus ducreyi (strain 35000HP / ATCC 700724).